A 536-amino-acid chain; its full sequence is Atrial natriuretic peptide receptor 3 (536 aa).

Residues 1–26 (MRSLLLFTFSACVLLARVLLAGGASS) form the signal peptide. A propeptide spanning residues 27–40 (GAGDTRPGSRRRAR) is cleaved from the precursor. Residues 41–478 (EALAAQKIEV…KSSGGLEESA (438 aa)) are Extracellular-facing. Asn-81 carries an N-linked (GlcNAc...) asparagine glycan. Residues Ser-101, Val-130, and Cys-131 each coordinate chloride. Cystine bridges form between Cys-103-Cys-131 and Cys-208-Cys-256. Asn-288 and Asn-389 each carry an N-linked (GlcNAc...) asparagine glycan. Residues 479 to 499 (VTGIVVGALLGAGLLMAFYFF) form a helical membrane-spanning segment. Topologically, residues 500–536 (RKKYRITIERRNQQEESNIGKHRELREDSIRSHFSVA) are cytoplasmic.

This sequence belongs to the ANF receptor family. In terms of assembly, homodimer; disulfide-linked. Interacts with OSTN.

It is found in the cell membrane. Its function is as follows. Receptor for the natriuretic peptide hormones, binding with similar affinities atrial natriuretic peptide NPPA/ANP, brain natriuretic peptide NPPB/BNP, and C-type natriuretic peptide NPPC/CNP. May function as a clearance receptor for NPPA, NPPB and NPPC, regulating their local concentrations and effects. Acts as a regulator of osteoblast differentiation and bone growth by binding to its ligand osteocrin, thereby preventing binding between NPR3/NPR-C and natriuretic peptides, leading to increase cGMP production. The chain is Atrial natriuretic peptide receptor 3 (Npr3) from Mus musculus (Mouse).